The sequence spans 212 residues: Stem bromelain (212 aa).

2 disulfide bridges follow: cysteine 23–cysteine 63 and cysteine 57–cysteine 96. Cysteine 26 is a catalytic residue. Asparagine 117 carries an N-linked (GlcNAc...) asparagine glycan. An intrachain disulfide couples cysteine 152 to cysteine 199. Residue histidine 158 is part of the active site.

The protein belongs to the peptidase C1 family.

The enzyme catalyses Broad specificity for cleavage of proteins, but strong preference for Z-Arg-Arg-|-NHMec among small molecule substrates.. In terms of biological role, cysteine proteinase with a high level of diversity in substrate specificity. The chain is Stem bromelain from Ananas comosus (Pineapple).